Consider the following 246-residue polypeptide: MIIPAFDLINGRTVRLYQGDYSNQKNYNVNLFNSLEVYKSKGIEIVHLVDLDGAKNSANRQIELLKKIVSHTTVPVQVGGGIRTTKDISTLLDLGVKRVVIGSSIVSNKKQVKQWLNFYGPDAIVLALDVHVDSSNKKEISIDGWQKKTNFILEEIIEYFLSSGLKHVLCTDISRDGTLLGPNFKLYKEICSNFKNINFQASGGVASLQDIIFLKKTGVKSIIIGRSLLEKKFTIEEAVKCWQRES.

The active-site Proton acceptor is aspartate 7. Aspartate 129 serves as the catalytic Proton donor.

It belongs to the HisA/HisF family.

The protein localises to the cytoplasm. The enzyme catalyses 1-(5-phospho-beta-D-ribosyl)-5-[(5-phospho-beta-D-ribosylamino)methylideneamino]imidazole-4-carboxamide = 5-[(5-phospho-1-deoxy-D-ribulos-1-ylimino)methylamino]-1-(5-phospho-beta-D-ribosyl)imidazole-4-carboxamide. The protein operates within amino-acid biosynthesis; L-histidine biosynthesis; L-histidine from 5-phospho-alpha-D-ribose 1-diphosphate: step 4/9. This Buchnera aphidicola subsp. Acyrthosiphon pisum (strain Tuc7) protein is 1-(5-phosphoribosyl)-5-[(5-phosphoribosylamino)methylideneamino] imidazole-4-carboxamide isomerase.